A 122-amino-acid polypeptide reads, in one-letter code: Large ribosomal subunit protein bL12 (122 aa).

It belongs to the bacterial ribosomal protein bL12 family. In terms of assembly, homodimer. Part of the ribosomal stalk of the 50S ribosomal subunit. Forms a multimeric L10(L12)X complex, where L10 forms an elongated spine to which 2 to 4 L12 dimers bind in a sequential fashion. Binds GTP-bound translation factors.

In terms of biological role, forms part of the ribosomal stalk which helps the ribosome interact with GTP-bound translation factors. Is thus essential for accurate translation. The polypeptide is Large ribosomal subunit protein bL12 (Dichelobacter nodosus (strain VCS1703A)).